We begin with the raw amino-acid sequence, 316 residues long: MANLKEIRDRIVSVKNTRKITEAMRLVAAAKVRRAQDQVLKSRPFADKLARVLENIQSRVQFEAVDSPLLSKREVKSISLVCITADRGLCGGYNTNIIKKVEIRYAELVKQGYQPNLILVGKKAIGYFQNRKDRYVIKSTFKELEQVPTVKDSEGVTNEILAEFLSENSDRVEIIYTKFITLVSCAPVVQTLLPLDPQGIAEENDEIFRLTTKDSKLLVEKSNIEKSDSEKLPSDIVFEQSPDQLLDSLLPLYLQNQVLRALQESAASELACRMTAMNNASDNAKELASTLNLTYNKARQAAITQEILEVVGGSVV.

Belongs to the ATPase gamma chain family. F-type ATPases have 2 components, CF(1) - the catalytic core - and CF(0) - the membrane proton channel. CF(1) has five subunits: alpha(3), beta(3), gamma(1), delta(1), epsilon(1). CF(0) has three main subunits: a, b and c.

The protein localises to the cellular thylakoid membrane. Produces ATP from ADP in the presence of a proton gradient across the membrane. The gamma chain is believed to be important in regulating ATPase activity and the flow of protons through the CF(0) complex. The chain is ATP synthase gamma chain from Prochlorococcus marinus (strain MIT 9301).